The sequence spans 365 residues: Chorismate synthase (365 aa).

R46 contacts NADP(+). FMN-binding positions include R123–S125, N241–G242, G281, K296–S300, and R322.

Belongs to the chorismate synthase family. In terms of assembly, homotetramer. Requires FMNH2 as cofactor.

It carries out the reaction 5-O-(1-carboxyvinyl)-3-phosphoshikimate = chorismate + phosphate. The protein operates within metabolic intermediate biosynthesis; chorismate biosynthesis; chorismate from D-erythrose 4-phosphate and phosphoenolpyruvate: step 7/7. In terms of biological role, catalyzes the anti-1,4-elimination of the C-3 phosphate and the C-6 proR hydrogen from 5-enolpyruvylshikimate-3-phosphate (EPSP) to yield chorismate, which is the branch point compound that serves as the starting substrate for the three terminal pathways of aromatic amino acid biosynthesis. This reaction introduces a second double bond into the aromatic ring system. The chain is Chorismate synthase from Helicobacter pylori (strain Shi470).